Reading from the N-terminus, the 480-residue chain is Putative auxin transporter-like protein 4 (480 aa).

The Cytoplasmic segment spans residues 1 to 66; it reads MASEKVETIV…DAWFSCASNQ (66 aa). A helical membrane pass occupies residues 67 to 84; that stretch reads VAQVLLTLPYSFSQLGMA. The Extracellular portion of the chain corresponds to 85-86; sequence SG. Residues 87-107 form a helical membrane-spanning segment; sequence VAFQVFYGLMGSWTAYLISVL. At 108–143 the chain is on the cytoplasmic side; that stretch reads YVEYRTRRERDKVDFRNHVIQWFEVLDGLLGRHWRN. A helical membrane pass occupies residues 144–164; the sequence is AGLLFNCTFLLFGSVIQLIAC. Residues 165-179 are Extracellular-facing; sequence ASNIYYINDRLDKRT. The chain crosses the membrane as a helical span at residues 180-200; the sequence is WTYIFGACCATTVFVPSFHNY. Topologically, residues 201–203 are cytoplasmic; the sequence is RVW. A helical transmembrane segment spans residues 204-224; sequence SFLGLLMTSYTAWYLTVAAVV. Topologically, residues 225 to 241 are extracellular; that stretch reads HGKVDGAAPRAGPSKTM. Residues 242-262 form a helical membrane-spanning segment; that stretch reads VLYFTGATNILYTFGGHAVTV. Topologically, residues 263 to 275 are cytoplasmic; it reads EIMHAMWRPRRFK. A helical membrane pass occupies residues 276 to 296; that stretch reads MIYLAATAYVLTLTLPSAAAM. Topologically, residues 297–323 are extracellular; it reads YWAFGDALLDHSNAFALLPRTPWRDAA. A helical transmembrane segment spans residues 324–344; sequence VVLMLIHQFITFGFACTPLYF. Residues 345–365 lie on the Cytoplasmic side of the membrane; the sequence is VWEKAIGVHGGAGVLRRAAAR. A helical transmembrane segment spans residues 366 to 386; the sequence is LPVVLPIWFLAVIFPFFGPIN. Position 387 (S387) is a topological domain, extracellular. The chain crosses the membrane as a helical span at residues 388–408; sequence TVGSFLVSFTVYIIPAMAHMA. The Cytoplasmic portion of the chain corresponds to 409–433; sequence TFAPAAARENAVEPPPRALGGWPGT. A helical transmembrane segment spans residues 434-454; sequence FAANCFVVAWVLVVGFGFGGW. Over 455–480 the chain is Extracellular; that stretch reads ASTVNFVRQVDTFGLFTKCYQCPPRH.

This sequence belongs to the amino acid/polyamine transporter 2 family. Amino acid/auxin permease (AAAP) (TC 2.A.18.1) subfamily.

It is found in the cell membrane. Functionally, carrier protein involved in proton-driven auxin influx. May mediate the formation of auxin gradient from developing leaves (site of auxin biosynthesis) to tips. This is Putative auxin transporter-like protein 4 from Oryza sativa subsp. japonica (Rice).